A 350-amino-acid polypeptide reads, in one-letter code: MIFTMYFFRNFVFLHSFMNYIIKVKSILINRYSLATCNAILLYFFQTNYYKIYLLVNTSLSFYNLIFFLRNFLRIVKKKNDPKVFLLALLIISKNYIQYALYCNFLFQVGNRTLKVIKSVEISKNEILKNDPSLKALEFWKKIKIFYSKNFISKIAVIMVISFSGYCAFNFAFKFFGVLKESSKILASFFSFNHDQKNDNSEDNRSEDDLKSSQDPVNIPSIEQSFKVEDFSIFNPDFWSTDFDKILLEEGYDLEGSLSTLWLTPRTFIVMKRIVQTGFYLSMCVANAYAIAETVKRGQPVSNDMLQFNPTLQTGFVYPYGQSMSAPGQIPGGIWAERLFLKKKCLLHKI.

Residues 197 to 212 (KNDNSEDNRSEDDLKS) show a composition bias toward basic and acidic residues. Residues 197–217 (KNDNSEDNRSEDDLKSSQDPV) are disordered.

The protein resides in the plastid. It is found in the chloroplast. This is an uncharacterized protein from Euglena gracilis.